We begin with the raw amino-acid sequence, 952 residues long: Anion exchange protein 4 (952 aa).

Positions 1–41 are disordered; that stretch reads MKLPGQGDFESSDAHENAHSEEPDSGLGPGPGLNGPSGIDI. A compositionally biased stretch (basic and acidic residues) spans 12 to 22; that stretch reads SDAHENAHSEE. 4 helical membrane passes run 385–405, 413–433, 470–490, and 501–521; these read AVFY…GLLG, GVLE…LMAG, VGIW…SLLV, and FCAL…LNLI. Residues Asn-546 and Asn-569 are each glycosylated (N-linked (GlcNAc...) asparagine). Helical transmembrane passes span 593-613, 634-654, 681-701, 727-747, 784-804, 807-827, and 870-890; these read VPDI…CAIA, FSSV…GLAT, PWWL…LIFM, LFCV…WYVS, GLVV…LKFI, PVLY…IQFV, and VVKS…LVAI. The segment at 915 to 938 is disordered; the sequence is ETIPENRSEPEHLFSGNDSEDSEL. Residues Asn-920, Asn-931, and Asn-948 are each glycosylated (N-linked (GlcNAc...) asparagine).

This sequence belongs to the anion exchanger (TC 2.A.31) family. Expressed in submandibular gland (SMG) duct and cortical collecting duct (CCD) of kidney. Lower expressed in duodenal villi.

Its subcellular location is the basolateral cell membrane. It carries out the reaction 2 hydrogencarbonate(out) + chloride(in) + Na(+)(out) = 2 hydrogencarbonate(in) + chloride(out) + Na(+)(in). The catalysed reaction is K(+)(in) + 2 hydrogencarbonate(in) + chloride(out) = K(+)(out) + 2 hydrogencarbonate(out) + chloride(in). It catalyses the reaction Li(+)(in) + 2 hydrogencarbonate(in) + chloride(out) = Li(+)(out) + 2 hydrogencarbonate(out) + chloride(in). The enzyme catalyses Rb(+)(in) + 2 hydrogencarbonate(in) + chloride(out) = Rb(+)(out) + 2 hydrogencarbonate(out) + chloride(in). It carries out the reaction Cs(+)(in) + 2 hydrogencarbonate(in) + chloride(out) = Cs(+)(out) + 2 hydrogencarbonate(out) + chloride(in). Its activity is regulated as follows. Cl(-)/HCO3(-) exchanger activity is substantially increased in response to 5 uM isoproterenol. Cl(-)/HCO3(-) exchanger activity is increased by both forskolin and coexpression with the catalytic subunit alpha of PKA. In terms of biological role, electroneutral Cl(-)/HCO3(-) antiporter that favors chloride ion entry and efflux of hydrogencarbonate and sodium ion across the basolateral membrane and may participate in salivary secretion. Also mediates Cl(-)/HCO3(-) exchange activity in the presence of K(+) as well as Cs(+), Li(+), and Rb(+). Does not contribute to Cl(-)/HCO3(-) exchanger in the apical membrane of the upper villous epithelium. This Mus musculus (Mouse) protein is Anion exchange protein 4.